The primary structure comprises 631 residues: Tumor protein p73 (631 aa).

The interval 1–43 is transactivation; the sequence is MAQTSSSSSSTFEHLWSSLEPDSTYFDLPQPSQGTSEASGSEE. Disordered regions lie at residues 23–43 and 69–113; these read STYF…GSEE and SRAA…NTDY. Threonine 24 carries the post-translational modification Phosphothreonine; by PLK1. Tyrosine 25 carries the post-translational modification Phosphotyrosine; by SRC and HCK. Polar residues-rich tracts occupy residues 30–43 and 86–100; these read QPSQ…GSEE and PTHS…TFDT. Tyrosine 91 is modified (phosphotyrosine; by ABL1). The tract at residues 123-302 is DNA-binding; it reads FQQSSTAKSA…DRKADEDHYR (180 aa). Zn(2+) is bound by residues cysteine 186, histidine 189, cysteine 250, and cysteine 254. A compositionally biased stretch (polar residues) spans 306–315; it reads ALNESTTKNG. The disordered stretch occupies residues 306 to 334; that stretch reads ALNESTTKNGAASKRAFKQSPPAIPALGT. An interaction with HIPK2 region spans residues 337–372; sequence KKRRHGDEDMFYMHVRGRENFEILMKVKESLELMEL. The tract at residues 337–378 is oligomerization; that stretch reads KKRRHGDEDMFYMHVRGRENFEILMKVKESLELMELVPQPLV. A PPxY motif motif is present at residues 477-481; the sequence is PPPPY. One can recognise an SAM domain in the interval 479-545; that stretch reads PPYHADPSLV…WRGLQDLKQS (67 aa). A Glycyl lysine isopeptide (Lys-Gly) (interchain with G-Cter in SUMO); alternate cross-link involves residue lysine 622. A Glycyl lysine isopeptide (Lys-Gly) (interchain with G-Cter in SUMO2); alternate cross-link involves residue lysine 622.

It belongs to the p53 family. In terms of assembly, found in a complex with p53/TP53 and CABLES1. The C-terminal oligomerization domain binds to the ABL1 tyrosine kinase SH3 domain. Interacts with HECW2, HIPK2, RANBP9 and WWOX. Interacts (via SAM domain) with FBXO45 (via B30.2/SPRY domain). Interacts with YAP1 (phosphorylated form). Interacts with HCK (via SH3 domain); this inhibits TP73 activity and degradation. Interacts (via SAM domain) with NQO1; this interaction is NADH-dependent, stabilizes TP73 in response to oxidative stress and protects it from ubiquitin-independent degradation by the 20S proteasome. Zn(2+) serves as cofactor. Sumoylated on Lys-622, which potentiates proteasomal degradation but does not affect transcriptional activity. In terms of processing, phosphorylation by PLK1 and PLK3 inhibits the transcription regulator activity and pro-apoptotic function. Higher levels of phosphorylation seen in striatal neurons of. mutant huntingtin (htt) transgenic mice. Post-translationally, polyubiquitinated by RCHY1/PIRH2; leading to its degradation by the proteasome. Found in striatal neurons of mutant huntingtin (htt) transgenic mice (at protein level). Isoform 1 is expressed in the nasal epithelium, the vomeronasal organ, the hippocampus and the hypothalamus.

The protein localises to the nucleus. It is found in the cytoplasm. In terms of biological role, participates in the apoptotic response to DNA damage. Isoforms containing the transactivation domain are pro-apoptotic, isoforms lacking the domain are anti-apoptotic and block the function of p53 and transactivating p73 isoforms. May be a tumor suppressor protein. Is an activator of FOXJ1 expression, essential for the positive regulation of lung ciliated cell differentiation. This chain is Tumor protein p73 (Tp73), found in Mus musculus (Mouse).